Reading from the N-terminus, the 788-residue chain is Glycerol-3-phosphate acyltransferase (788 aa).

The tract at residues 104–135 (LLPGRDPYHPNPRQQRRILRSDPQRARVMAGE) is disordered. The HXXXXD motif motif lies at 271–276 (SHRSYI).

This sequence belongs to the GPAT/DAPAT family.

It is found in the cell membrane. It catalyses the reaction sn-glycerol 3-phosphate + an acyl-CoA = a 1-acyl-sn-glycero-3-phosphate + CoA. Its pathway is phospholipid metabolism; CDP-diacylglycerol biosynthesis; CDP-diacylglycerol from sn-glycerol 3-phosphate: step 1/3. The chain is Glycerol-3-phosphate acyltransferase from Mycobacterium marinum (strain ATCC BAA-535 / M).